The primary structure comprises 143 residues: Putative pre-16S rRNA nuclease (143 aa).

The protein belongs to the YqgF nuclease family.

Its subcellular location is the cytoplasm. Its function is as follows. Could be a nuclease involved in processing of the 5'-end of pre-16S rRNA. The sequence is that of Putative pre-16S rRNA nuclease from Leuconostoc citreum (strain KM20).